The sequence spans 164 residues: Phosphopantetheine adenylyltransferase (164 aa).

This sequence belongs to the eukaryotic CoaD family.

The protein resides in the cytoplasm. It catalyses the reaction (R)-4'-phosphopantetheine + ATP + H(+) = 3'-dephospho-CoA + diphosphate. It functions in the pathway cofactor biosynthesis; coenzyme A biosynthesis. Reversibly transfers an adenylyl group from ATP to 4'-phosphopantetheine, yielding dephospho-CoA (dPCoA) and pyrophosphate. The chain is Phosphopantetheine adenylyltransferase from Methanothermobacter thermautotrophicus (strain ATCC 29096 / DSM 1053 / JCM 10044 / NBRC 100330 / Delta H) (Methanobacterium thermoautotrophicum).